A 567-amino-acid polypeptide reads, in one-letter code: Hexose transporter HXT15 (567 aa).

The segment covering 1–19 (MASEQSSPEINADNLNSSA) has biased composition (polar residues). The tract at residues 1-32 (MASEQSSPEINADNLNSSAADVHVQPPGEKEW) is disordered. Residues 1–55 (MASEQSSPEINADNLNSSAADVHVQPPGEKEWSDGFYDKEVINGNTPDAPKRGFL) lie on the Cytoplasmic side of the membrane. The chain crosses the membrane as a helical span at residues 56 to 76 (GYLIIYLLCYPVSFGGFLPGW). At 77–112 (DSGITAGFINMDNFKMNFGSYKHSTGEYYLSNVRMG) the chain is on the extracellular side. Residues 113 to 133 (LLVAMFSVGCSIGGVAFARLA) form a helical membrane-spanning segment. The Cytoplasmic segment spans residues 134 to 139 (DTLGRR). A helical membrane pass occupies residues 140–160 (LAIVIVVLVYMVGAIIQISSN). The Extracellular portion of the chain corresponds to 161 to 170 (HKWYQYFVGK). The chain crosses the membrane as a helical span at residues 171–191 (IIYGLGAGGCSVLCPMLLSEI). Residues 192-197 (APTDLR) are Cytoplasmic-facing. The helical transmembrane segment at 198–218 (GGLVSLYQLNMTFGIFLGYCS) threads the bilayer. At 219–232 (VYGTRKYSNTAQWR) the chain is on the extracellular side. A helical transmembrane segment spans residues 233-253 (IPVGLCFLWALIIIVGMLLVP). The Cytoplasmic portion of the chain corresponds to 254 to 336 (ESPRYLIECE…VQTFLQLTGE (83 aa)). Residues 337–353 (NYFFFYGTTIFKSVGLT) form a helical membrane-spanning segment. Residues 354 to 359 (DGFETS) are Extracellular-facing. The chain crosses the membrane as a helical span at residues 360–377 (IVLGTVNFFSTIIAVMVV). The Cytoplasmic portion of the chain corresponds to 378–384 (DKIGRRK). Residues 385–405 (CLLFGAASMMACMVIFASIGV) traverse the membrane as a helical segment. Residues 406 to 427 (KCLYPHGQDGPSSKGAGNAMIV) are Extracellular-facing. A helical transmembrane segment spans residues 428 to 448 (FTCFYIFCFATTWAPVAYIVV). The Cytoplasmic portion of the chain corresponds to 449 to 465 (AESFPSKVKSKAMSIST). The chain crosses the membrane as a helical span at residues 466–486 (AFNWLWQFLIGFFTPFITGSI). Residue histidine 487 is a topological domain, extracellular. A helical membrane pass occupies residues 488–508 (FYYGYVFVGCLVAMFLYVFFF). Residues 509–567 (LPETIGLSLEEIQLLYEEGIKPWKSASWVPPSRRGASSRETEAKKKSWKEVLKFPKSFN) are Cytoplasmic-facing. The tract at residues 533 to 555 (SASWVPPSRRGASSRETEAKKKS) is disordered. Residues 545 to 555 (SSRETEAKKKS) are compositionally biased toward basic and acidic residues.

This sequence belongs to the major facilitator superfamily. Sugar transporter (TC 2.A.1.1) family.

The protein localises to the membrane. Functionally, probable glucose transporter. The polypeptide is Hexose transporter HXT15 (HXT15) (Saccharomyces cerevisiae (strain ATCC 204508 / S288c) (Baker's yeast)).